The primary structure comprises 275 residues: Putative ABC transporter permease protein ORF2 (275 aa).

Helical transmembrane passes span 11–31 (YFIF…FMLF), 74–94 (IAVS…AFAF), 108–128 (LIIA…YVLT), 136–156 (TVFA…IFIL), 185–205 (ILLP…GTYL), and 239–259 (IPAI…AYIF). The ABC transmembrane type-1 domain maps to 69–260 (LKNSVIAVSI…LPMLIAYIFG (192 aa)).

Belongs to the binding-protein-dependent transport system permease family. MalFG subfamily.

It is found in the cell membrane. The protein is Putative ABC transporter permease protein ORF2 of Caldicellulosiruptor sp. (strain Rt8B.4).